The sequence spans 28 residues: Dermaseptin-6TR (28 aa).

In terms of tissue distribution, expressed by the skin glands.

The protein localises to the secreted. Has antimicrobial activity. This Phyllomedusa trinitatis (Trinidad leaf frog) protein is Dermaseptin-6TR.